The chain runs to 134 residues: UPF0102 protein Adeh_1910 (134 aa).

Belongs to the UPF0102 family.

The polypeptide is UPF0102 protein Adeh_1910 (Anaeromyxobacter dehalogenans (strain 2CP-C)).